We begin with the raw amino-acid sequence, 806 residues long: Acetyl-CoA decarbonylase/synthase complex subunit alpha 1 (806 aa).

6 residues coordinate [4Fe-4S] cluster: Cys73, Cys76, Cys77, Cys79, Cys84, and Cys94. Residue His117 coordinates CO. [Ni-4Fe-4S] cluster is bound by residues His250, Cys278, and Cys323. 4Fe-4S ferredoxin-type domains are found at residues 407–436 (DEEF…IPEA) and 446–475 (SYLD…LNII). Residues Cys417, Cys420, Cys423, Cys427, Cys455, Cys458, Cys461, and Cys465 each contribute to the [4Fe-4S] cluster site. Residues Cys523, Cys552, and Cys587 each contribute to the [Ni-4Fe-4S] cluster site.

This sequence belongs to the Ni-containing carbon monoxide dehydrogenase family. In terms of assembly, heterotetramer of two alpha and two epsilon subunits. The ACDS complex is made up of alpha, epsilon, beta, gamma and delta subunits with a probable stoichiometry of (alpha(2)epsilon(2))(4)-beta(8)-(gamma(1)delta(1))(8). It depends on [4Fe-4S] cluster as a cofactor. [Ni-4Fe-4S] cluster serves as cofactor.

The enzyme catalyses CO + 2 oxidized [2Fe-2S]-[ferredoxin] + H2O = 2 reduced [2Fe-2S]-[ferredoxin] + CO2 + 2 H(+). It participates in one-carbon metabolism; methanogenesis from acetate. Its activity is regulated as follows. Carbon monoxide dehydrogenase activity is inhibited by KCN and is rapidly inactivated by O(2). Its function is as follows. Part of the ACDS complex that catalyzes the reversible cleavage of acetyl-CoA, allowing growth on acetate as sole source of carbon and energy. The alpha-epsilon subcomponent functions as a carbon monoxide dehydrogenase. This is Acetyl-CoA decarbonylase/synthase complex subunit alpha 1 from Methanosarcina barkeri (strain Fusaro / DSM 804).